Reading from the N-terminus, the 137-residue chain is uncharacterized protein (137 aa).

The segment covering 1–10 has biased composition (low complexity); that stretch reads MISVDVPGHP. A disordered region spans residues 1–23; that stretch reads MISVDVPGHPGDAGGGGGGARKV. A compositionally biased stretch (gly residues) spans 11–20; that stretch reads GDAGGGGGGA.

This is an uncharacterized protein from Human adenovirus C serotype 2 (HAdV-2).